The chain runs to 506 residues: Cobyric acid synthase (506 aa).

The region spanning 251 to 448 is the GATase cobBQ-type domain; sequence DITIAIVQLP…LHGLFDSDAF (198 aa). Cys332 serves as the catalytic Nucleophile. His440 is a catalytic residue.

This sequence belongs to the CobB/CobQ family. CobQ subfamily.

It participates in cofactor biosynthesis; adenosylcobalamin biosynthesis. Functionally, catalyzes amidations at positions B, D, E, and G on adenosylcobyrinic A,C-diamide. NH(2) groups are provided by glutamine, and one molecule of ATP is hydrogenolyzed for each amidation. The chain is Cobyric acid synthase from Salmonella arizonae (strain ATCC BAA-731 / CDC346-86 / RSK2980).